Here is a 362-residue protein sequence, read N- to C-terminus: Biotin synthase (362 aa).

One can recognise a Radical SAM core domain in the interval 46–273 (NEVQVSTLLS…ASHVRLSAGR (228 aa)). [4Fe-4S] cluster contacts are provided by Cys61, Cys65, and Cys68. Cys105, Cys136, Cys196, and Arg268 together coordinate [2Fe-2S] cluster. The disordered stretch occupies residues 320–339 (PAQRAQKPDQVQEEELLAEV).

The protein belongs to the radical SAM superfamily. Biotin synthase family. As to quaternary structure, homodimer. The cofactor is [4Fe-4S] cluster. It depends on [2Fe-2S] cluster as a cofactor.

The catalysed reaction is (4R,5S)-dethiobiotin + (sulfur carrier)-SH + 2 reduced [2Fe-2S]-[ferredoxin] + 2 S-adenosyl-L-methionine = (sulfur carrier)-H + biotin + 2 5'-deoxyadenosine + 2 L-methionine + 2 oxidized [2Fe-2S]-[ferredoxin]. Its pathway is cofactor biosynthesis; biotin biosynthesis; biotin from 7,8-diaminononanoate: step 2/2. Its function is as follows. Catalyzes the conversion of dethiobiotin (DTB) to biotin by the insertion of a sulfur atom into dethiobiotin via a radical-based mechanism. The protein is Biotin synthase of Aeromonas hydrophila subsp. hydrophila (strain ATCC 7966 / DSM 30187 / BCRC 13018 / CCUG 14551 / JCM 1027 / KCTC 2358 / NCIMB 9240 / NCTC 8049).